A 2391-amino-acid polypeptide reads, in one-letter code: Filaggrin-2 (2391 aa).

Residues Met-1–Leu-81 form an S-100-like region. 2 consecutive EF-hand domains span residues Val-8–Pro-43 and Asp-49–Ala-84. 5 residues coordinate Ca(2+): Asp-62, Asp-64, Asp-66, Arg-68, and Glu-73. Disordered stretches follow at residues Ala-96–Arg-275, Ser-349–Gln-369, and Asn-406–His-2391. Residues Gly-98–Arg-107 show a composition bias toward basic residues. The span at Glu-111–Asp-121 shows a compositional bias: acidic residues. The segment covering Gly-149 to Gly-163 has biased composition (basic residues). Residues Gly-166–Gly-176 show a composition bias toward polar residues. A compositionally biased stretch (basic and acidic residues) spans Gly-193 to Asn-209. One copy of the Filaggrin 1 repeat lies at Glu-245 to Gly-289. 2 stretches are compositionally biased toward polar residues: residues Gly-420–Phe-442 and Ser-449–Thr-476. The Filaggrin 2 repeat unit spans residues Ser-421–Tyr-466. Residues Gly-480 to Gln-507 are compositionally biased toward gly residues. A compositionally biased stretch (low complexity) spans His-508–Arg-562. Over residues Gly-568–Ser-604 the composition is skewed to gly residues. Low complexity predominate over residues Gly-605–Phe-655. The segment covering Gly-656–Ser-666 has biased composition (gly residues). Low complexity predominate over residues Gly-667–Gln-734. Residues His-735–Ser-756 show a composition bias toward gly residues. The span at Gly-757–Phe-807 shows a compositional bias: low complexity. Over residues Gly-808–Ser-831 the composition is skewed to gly residues. Low complexity predominate over residues Gly-832–Phe-884. A compositionally biased stretch (gly residues) spans Gly-885–Ser-908. The segment covering His-918–Gly-956 has biased composition (low complexity). Residues Gln-957 to Ser-972 show a composition bias toward gly residues. 2 stretches are compositionally biased toward low complexity: residues Gly-973–Gly-982 and Ser-994–Gln-1027. The stretch at Ser-1019–Phe-1051 is one Filaggrin 3 repeat. The segment covering Gly-1052–Ser-1062 has biased composition (gly residues). Positions Gly-1063–Gln-1098 are enriched in low complexity. Residues Gly-1097–Phe-1141 form a Filaggrin 4 repeat. Residues Gln-1111–Lys-1137 show a composition bias toward gly residues. Positions Ser-1148–Gly-1174 are enriched in low complexity. Over residues Pro-1175–Asp-1198 the composition is skewed to polar residues. Over residues Gly-1206 to Gln-1220 the composition is skewed to gly residues. Positions Val-1226 to His-1249 are enriched in polar residues. Positions Ser-1250–Arg-1263 are enriched in low complexity. A Phosphoserine modification is found at Ser-1276. A compositionally biased stretch (polar residues) spans His-1329–Gln-1343. Residues Ser-1346–Val-1355 show a composition bias toward basic and acidic residues. The span at Gln-1366–His-1377 shows a compositional bias: polar residues. Residues Gly-1378–Thr-1390 are compositionally biased toward basic and acidic residues. Residues His-1406–Thr-1416 show a composition bias toward low complexity. Residues Ser-1427 and Ser-1428 each carry the phosphoserine modification. Polar residues predominate over residues Arg-1439–Ser-1459. One copy of the Filaggrin 5 repeat lies at Gly-1455–His-1510. The span at Thr-1487–Arg-1496 shows a compositional bias: low complexity. A phosphoserine mark is found at Ser-1504 and Ser-1505. Residues His-1510 to His-1529 are compositionally biased toward low complexity. Polar residues predominate over residues His-1544–Glu-1559. Residues Gln-1560–Gln-1572 are compositionally biased toward low complexity. Composition is skewed to basic and acidic residues over residues Ser-1575–Val-1584 and Gln-1605–Gly-1618. The residue at position 1579 (Ser-1579) is a Phosphoserine. A Filaggrin 6 repeat occupies Glu-1607–His-1662. Residues Thr-1627 to Gln-1649 are compositionally biased toward low complexity. The span at Ser-1652–Val-1661 shows a compositional bias: basic and acidic residues. Ser-1656 and Ser-1657 each carry phosphoserine. Composition is skewed to low complexity over residues His-1662 to Ser-1686 and Gly-1711 to Thr-1720. A compositionally biased stretch (basic and acidic residues) spans Gln-1755–Gly-1768. The stretch at Gly-1757–His-1812 is one Filaggrin 7 repeat. Over residues Gly-1784–Thr-1795 the composition is skewed to low complexity. Residues Ser-1800 and Ser-1807 each carry the phosphoserine modification. Basic and acidic residues predominate over residues Gly-1834 to Gly-1845. Over residues Gly-1849 to Thr-1873 the composition is skewed to low complexity. Basic and acidic residues predominate over residues Gly-1879–Val-1888. A phosphoserine mark is found at Ser-1883, Ser-1884, and Ser-1959. Filaggrin repeat units lie at residues Asp-1928–Pro-1964 and Pro-1984–His-2039. Composition is skewed to low complexity over residues Gly-1963–His-1982 and Gly-2013–Thr-2022. Ser-2034 carries the post-translational modification Phosphoserine. Composition is skewed to low complexity over residues His-2039 to Gly-2059, His-2114 to Thr-2125, and His-2162 to Gln-2176. A Filaggrin 10 repeat occupies Gly-2134 to His-2189. Over residues Ser-2179–Ser-2190 the composition is skewed to basic and acidic residues. Composition is skewed to low complexity over residues His-2201 to Ser-2211, Gln-2219 to Asp-2228, and Gly-2238 to Thr-2247. A compositionally biased stretch (polar residues) spans Gly-2273–Ser-2288. Residues Ser-2320–His-2331 show a composition bias toward low complexity. The span at Ser-2367–His-2391 shows a compositional bias: polar residues.

Belongs to the S100-fused protein family. The protein in the N-terminal section; belongs to the S-100 family. Post-translationally, deiminated by PADI1, PADI2 or PADI3 in vitro. The deiminated form is degraded by calpain-1/CAPN1 more quickly and into shorter peptides than the intact protein. In terms of processing, may be processed by calpain-1/CAPN1 in the uppermost epidermal layers. In terms of tissue distribution, expressed in skin, thymus, stomach and placenta, but not detected in heart, brain, liver, lung, bone marrow, small intestine, spleen, prostate, colon, adrenal gland, kidney, pancreas, mammary gland, bladder, thyroid, salivary gland and trachea. Weakly expressed in esophagus, tonsils and testis (at protein level). In the skin, strongly expressed in the upper stratum granulosum and lower stratum corneum, but not detected in the upper stratum corneum (at protein level). In scalp hair follicles, mainly restricted within the granular and cornified cells surrounding the infundibular outer root sheath, with weak expression in central and proximal outer root sheath (at protein level). Tends to be down-regulated in sporiatic lesions compared to non-lesional skin inthe same patients.

Its subcellular location is the cytoplasm. The protein resides in the cytoplasmic granule. Functionally, essential for normal cell-cell adhesion in the cornified cell layers. Important for proper integrity and mechanical strength of the stratum corneum of the epidermis. The protein is Filaggrin-2 (FLG2) of Homo sapiens (Human).